Consider the following 932-residue polypeptide: ER degradation-enhancing alpha-mannosidase-like protein 3 (932 aa).

Positions 1–41 (MSEAGGRGCGSPVPQRARWRLVAATAAFCLVSATSVWTAGA) are cleaved as a signal peptide. The N-linked (GlcNAc...) asparagine glycan is linked to N118. E146 acts as the Proton donor in catalysis. N-linked (GlcNAc...) asparagine glycosylation is present at N195. D293 is a catalytic residue. Catalysis depends on E387, which acts as the Proton donor. E405 is an active-site residue. T491 serves as a coordination point for Ca(2+). 2 N-linked (GlcNAc...) asparagine glycosylation sites follow: N504 and N511. In terms of domain architecture, PA spans 674–779 (LSKHKETRGF…KEGSIILDAI (106 aa)). A compositionally biased stretch (basic and acidic residues) spans 790–799 (SDKAKDRDPE). The segment at 790–908 (SDKAKDRDPE…PNVSWGKKVQ (119 aa)) is disordered. 2 N-linked (GlcNAc...) asparagine glycosylation sites follow: N810 and N814. The segment covering 812 to 825 (SQNQSGEQISSSSQ) has biased composition (low complexity). Residues 856–890 (ASISPSEQTSNPTENHETTNLNGECTDLDNQLQEQ) are compositionally biased toward polar residues. N900 carries an N-linked (GlcNAc...) asparagine glycan. The Prevents secretion from ER motif lies at 929-932 (KDEL).

Belongs to the glycosyl hydrolase 47 family. Requires Ca(2+) as cofactor.

Its subcellular location is the endoplasmic reticulum lumen. It carries out the reaction N(4)-(alpha-D-Man-(1-&gt;2)-alpha-D-Man-(1-&gt;2)-alpha-D-Man-(1-&gt;3)-[alpha-D-Man-(1-&gt;2)-alpha-D-Man-(1-&gt;3)-[alpha-D-Man-(1-&gt;2)-alpha-D-Man-(1-&gt;6)]-alpha-D-Man-(1-&gt;6)]-beta-D-Man-(1-&gt;4)-beta-D-GlcNAc-(1-&gt;4)-beta-D-GlcNAc)-L-asparaginyl-[protein] (N-glucan mannose isomer 9A1,2,3B1,2,3) + 4 H2O = N(4)-(alpha-D-Man-(1-&gt;3)-[alpha-D-Man-(1-&gt;3)-[alpha-D-Man-(1-&gt;6)]-alpha-D-Man-(1-&gt;6)]-beta-D-Man-(1-&gt;4)-beta-D-GlcNAc-(1-&gt;4)-beta-D-GlcNAc)-L-asparaginyl-[protein] (N-glucan mannose isomer 5A1,2) + 4 beta-D-mannose. The catalysed reaction is N(4)-(alpha-D-Man-(1-&gt;2)-alpha-D-Man-(1-&gt;2)-alpha-D-Man-(1-&gt;3)-[alpha-D-Man-(1-&gt;3)-[alpha-D-Man-(1-&gt;2)-alpha-D-Man-(1-&gt;6)]-alpha-D-Man-(1-&gt;6)]-beta-D-Man-(1-&gt;4)-beta-D-GlcNAc-(1-&gt;4)-beta-D-GlcNAc)-L-asparaginyl-[protein] (N-glucan mannose isomer 8A1,2,3B1,3) + 3 H2O = N(4)-(alpha-D-Man-(1-&gt;3)-[alpha-D-Man-(1-&gt;3)-[alpha-D-Man-(1-&gt;6)]-alpha-D-Man-(1-&gt;6)]-beta-D-Man-(1-&gt;4)-beta-D-GlcNAc-(1-&gt;4)-beta-D-GlcNAc)-L-asparaginyl-[protein] (N-glucan mannose isomer 5A1,2) + 3 beta-D-mannose. It participates in protein modification; protein glycosylation. Functionally, involved in endoplasmic reticulum-associated degradation (ERAD). Accelerates the glycoprotein ERAD by proteasomes, by catalyzing mannose trimming from Man8GlcNAc2 to Man7GlcNAc2 in the N-glycans. May also participate in mannose trimming from all glycoproteins and not just misfolded ones targeted to ERAD. May have alpha 1,2-mannosidase activity. This chain is ER degradation-enhancing alpha-mannosidase-like protein 3 (EDEM3), found in Homo sapiens (Human).